The sequence spans 238 residues: Uridylate kinase (238 aa).

12 to 15 (KLSG) is a binding site for ATP. Glycine 54 provides a ligand contact to UMP. Residues glycine 55 and arginine 59 each coordinate ATP. UMP is bound by residues aspartate 74 and 135–142 (TGNPFFTT). ATP is bound by residues threonine 162, tyrosine 168, and aspartate 171.

It belongs to the UMP kinase family. As to quaternary structure, homohexamer.

The protein resides in the cytoplasm. The catalysed reaction is UMP + ATP = UDP + ADP. Its pathway is pyrimidine metabolism; CTP biosynthesis via de novo pathway; UDP from UMP (UMPK route): step 1/1. Its activity is regulated as follows. Inhibited by UTP. Functionally, catalyzes the reversible phosphorylation of UMP to UDP. The sequence is that of Uridylate kinase from Bordetella avium (strain 197N).